The chain runs to 386 residues: Methionine aminopeptidase 1 (386 aa).

The segment at 6-59 adopts a C6H2-type zinc-finger fold; it reads TRECETEGCHSEAKLQCPTCIKLGIQGSYFCSQECFKGSWATHKLLHKKAKEDK. Zn(2+) contacts are provided by Cys9, Cys14, Cys22, Cys25, Cys36, Cys40, His48, and His52. His202 is an a protein binding site. The Zn(2+) site is built by Asp219, Asp230, and His293. His300 serves as a coordination point for a protein. Zn(2+) is bound by residues Glu326 and Glu357.

This sequence belongs to the peptidase M24A family. Methionine aminopeptidase type 1 subfamily. In terms of assembly, associates with the 60S ribosomal subunit of the 80S translational complex. Zn(2+) serves as cofactor. Co(2+) is required as a cofactor. Requires Mn(2+) as cofactor. It depends on Fe(2+) as a cofactor.

Its subcellular location is the cytoplasm. It catalyses the reaction Release of N-terminal amino acids, preferentially methionine, from peptides and arylamides.. In terms of biological role, cotranslationally removes the N-terminal methionine from nascent proteins. The N-terminal methionine is often cleaved when the second residue in the primary sequence is small and uncharged (Met-Ala-, Cys, Gly, Pro, Ser, Thr, or Val). This is Methionine aminopeptidase 1 (metap1) from Danio rerio (Zebrafish).